The chain runs to 168 residues: Ribosome-binding factor A (168 aa).

Residues 125–138 (RVREGAKHAGDSDP) show a composition bias toward basic and acidic residues. A disordered region spans residues 125 to 168 (RVREGAKHAGDSDPYRVLGEGDLEGPATGGPDVEDEGGANSHDR).

The protein belongs to the RbfA family. Monomer. Binds 30S ribosomal subunits, but not 50S ribosomal subunits or 70S ribosomes.

It localises to the cytoplasm. Its function is as follows. One of several proteins that assist in the late maturation steps of the functional core of the 30S ribosomal subunit. Associates with free 30S ribosomal subunits (but not with 30S subunits that are part of 70S ribosomes or polysomes). Required for efficient processing of 16S rRNA. May interact with the 5'-terminal helix region of 16S rRNA. This Mycolicibacterium gilvum (strain PYR-GCK) (Mycobacterium gilvum (strain PYR-GCK)) protein is Ribosome-binding factor A.